The following is a 40-amino-acid chain: MANTTGRIPLWLVGTVTGTLVIGLMGIFFYGAYSGLGSSL.

A helical transmembrane segment spans residues 8–28 (IPLWLVGTVTGTLVIGLMGIF).

This sequence belongs to the PsbJ family. As to quaternary structure, PSII is composed of 1 copy each of membrane proteins PsbA, PsbB, PsbC, PsbD, PsbE, PsbF, PsbH, PsbI, PsbJ, PsbK, PsbL, PsbM, PsbT, PsbX, PsbY, PsbZ, Psb30/Ycf12, at least 3 peripheral proteins of the oxygen-evolving complex and a large number of cofactors. It forms dimeric complexes.

It is found in the plastid. The protein localises to the chloroplast thylakoid membrane. One of the components of the core complex of photosystem II (PSII). PSII is a light-driven water:plastoquinone oxidoreductase that uses light energy to abstract electrons from H(2)O, generating O(2) and a proton gradient subsequently used for ATP formation. It consists of a core antenna complex that captures photons, and an electron transfer chain that converts photonic excitation into a charge separation. This Psilotum nudum (Whisk fern) protein is Photosystem II reaction center protein J.